Here is a 448-residue protein sequence, read N- to C-terminus: Na(+)-malate symporter (448 aa).

A run of 11 helical transmembrane segments spans residues 31-51, 60-80, 86-106, 123-143, 153-173, 182-202, 214-234, 276-293, 297-319, 333-353, and 359-379; these read IGVI…LAAY, LGGF…GQRI, IGGP…YNVL, FLYF…NRIV, VPLV…GFIF, FFVV…PLSI, VFVS…IICA, LMGA…FGGL, FIFI…ANIL, FISS…FIPL, and VISI…IGSG.

The protein belongs to the 2-hydroxycarboxylate transporter (2-HCT) (TC 2.A.24) family.

It is found in the cell membrane. Functionally, acts as a Na(+)-malate symporter, as it catalyzes malate-dependent uptake of Na(+) and Na(+)-dependent uptake of malate. The protein is Na(+)-malate symporter of Bacillus subtilis (strain 168).